The primary structure comprises 150 residues: Transcriptional regulator MraZ (150 aa).

2 consecutive SpoVT-AbrB domains span residues 7–58 and 87–130; these read KEQH…EPEI and LDSV…SPEK.

This sequence belongs to the MraZ family. Forms oligomers.

It localises to the cytoplasm. The protein resides in the nucleoid. The protein is Transcriptional regulator MraZ of Chlorobium phaeobacteroides (strain BS1).